The chain runs to 191 residues: Ribonuclease M5 (191 aa).

The region spanning 8–91 (HEFIVVEGRD…AFINRQDALP (84 aa)) is the Toprim domain. Glu14, Asp60, and Asp62 together coordinate Mg(2+).

This sequence belongs to the ribonuclease M5 family. The cofactor is Mg(2+).

The protein resides in the cytoplasm. The catalysed reaction is Endonucleolytic cleavage of RNA, removing 21 and 42 nucleotides, respectively, from the 5'- and 3'-termini of a 5S-rRNA precursor.. Required for correct processing of both the 5' and 3' ends of 5S rRNA precursor. Cleaves both sides of a double-stranded region yielding mature 5S rRNA in one step. The sequence is that of Ribonuclease M5 from Listeria monocytogenes serovar 1/2a (strain ATCC BAA-679 / EGD-e).